A 333-amino-acid chain; its full sequence is Adenosine deaminase (333 aa).

2 residues coordinate Zn(2+): His-12 and His-14. Residues His-14, Asp-16, and Gly-170 each contribute to the substrate site. His-197 lines the Zn(2+) pocket. The Proton donor role is filled by Glu-200. Asp-278 is a Zn(2+) binding site. Asp-279 contacts substrate.

Belongs to the metallo-dependent hydrolases superfamily. Adenosine and AMP deaminases family. Adenosine deaminase subfamily. The cofactor is Zn(2+).

It catalyses the reaction adenosine + H2O + H(+) = inosine + NH4(+). It carries out the reaction 2'-deoxyadenosine + H2O + H(+) = 2'-deoxyinosine + NH4(+). Its function is as follows. Catalyzes the hydrolytic deamination of adenosine and 2-deoxyadenosine. The protein is Adenosine deaminase of Escherichia coli (strain SMS-3-5 / SECEC).